Here is a 452-residue protein sequence, read N- to C-terminus: Prephenate dehydrogenase [NADP(+)] (452 aa).

14–43 (KVIGIIGLGDMGLLYANKFTDAGWGVICCD) contributes to the NADP(+) binding site. The Prephenate/arogenate dehydrogenase domain occupies 14 to 297 (KVIGIIGLGD…GKHTGLLLLD (284 aa)).

Belongs to the prephenate/arogenate dehydrogenase family.

It catalyses the reaction prephenate + NADP(+) = 3-(4-hydroxyphenyl)pyruvate + CO2 + NADPH. It participates in amino-acid biosynthesis; L-tyrosine biosynthesis; (4-hydroxyphenyl)pyruvate from prephenate (NADP(+) route): step 1/1. In Saccharomyces cerevisiae (strain ATCC 204508 / S288c) (Baker's yeast), this protein is Prephenate dehydrogenase [NADP(+)] (TYR1).